Reading from the N-terminus, the 179-residue chain is Large ribosomal subunit protein uL6 (179 aa).

It belongs to the universal ribosomal protein uL6 family. Part of the 50S ribosomal subunit.

In terms of biological role, this protein binds to the 23S rRNA, and is important in its secondary structure. It is located near the subunit interface in the base of the L7/L12 stalk, and near the tRNA binding site of the peptidyltransferase center. This Chlorobium phaeobacteroides (strain BS1) protein is Large ribosomal subunit protein uL6.